Consider the following 338-residue polypeptide: MASGLGGLNKSPNGVVIGLAQLALPDPHTREALWAQTQKVVGMVAKARRSNPGMDLIVFPEYSLHGLSMSTAPEIMCSLDGPEVVALREACKEHRIWGCFSIMEANPQGNPFNSSLIVDDLGEIRLYYRKLHPWVPVEPWEPGDLGIPVCDGPRGSTLALIICHDGMFPEMARECAYKGADIMLRTAGYTAPIRHSWKITNQSNAFTNLMQTASVCMCGSDGTFDSMGEAMFVDFDGTIMAEGGGRADEIVCCELRPDLVREARVHWGVENNIYQFGHRGYVAVKGGARDCPYTYMRDLTAGQYRLPWENDVVHTDGRSCGFATPEREFKPTPSSWKE.

The region spanning 15–257 (VVIGLAQLAL…DEIVCCELRP (243 aa)) is the CN hydrolase domain. Catalysis depends on E61, which acts as the Proton acceptor. The active-site Proton donor is the K130. C163 acts as the Nucleophile in catalysis.

This sequence belongs to the carbon-nitrogen hydrolase superfamily. Aliphatic amidase family.

The enzyme catalyses formamide + H2O = formate + NH4(+). In terms of biological role, is an aliphatic amidase with a restricted substrate specificity, as it only hydrolyzes formamide. The polypeptide is Formamidase (Pseudomonas syringae pv. tomato (strain ATCC BAA-871 / DC3000)).